A 204-amino-acid polypeptide reads, in one-letter code: Allatotropin (204 aa).

The N-terminal stretch at 1 to 20 is a signal peptide; the sequence is MNLTMQLAVIVAVCLCLAEG. Positions 21–35 are excised as a propeptide; the sequence is APDVRLTRTKQQRPT. Positions 47-83 are disordered; sequence RGFGKRDRPHPRAERDVDHQAPSARPNRGTPTFKSPT. A Phenylalanine amide modification is found at Phe49. Residues 50 to 65 show a composition bias toward basic and acidic residues; it reads GKRDRPHPRAERDVDH. Positions 53–204 are excised as a propeptide; it reads DRPHPRAERD…LSSEELLRNF (152 aa).

As to expression, expressed extensively in the brain, frontal ganglion and terminal ganglion of the day 2 fifth instar larva (at protein level). Not expressed in the larval brain after day 4 of the fifth instar, or in the brain of the pupa or adult. Expression in the terminal ganglion is localized to cells in the posterior portion of the seventh neuromere of day 2 fifth instar larvae. In the pupa and adult expression is detected in the medial region of neuromere 6, the dorsal medial region of neuromere 7, and the posterior neuromere of the terminal ganglion (at protein level). In the frontal ganglion expression decreases in the wandering larvae and is present at low levels in during pupal ecdysis, but is not detected in the adult. Expressed in the subesophageal ganglion of day 2 fifth instar larva, but not at any time before or after day 2. Not expressed in the abdominal ganglia 1-6 of the day 2 fifth instar larva (at protein level). Expressed in the anterior neuromeres of the pterothoracic ganglion in pupa but not in adult (at protein level). Expressed in the unfused abdominal ganglia of day 10 pupae, and in pharate adult is expressed in median neurosecretory cells M1, M2 and M5, but not in median neurosecretory cells M3 and M4 (at protein level). Not expressed in the differentiated median neurosecretory cells M5 of the larva (at protein level). In the pharate adult brain isoform 3 is the predominant form, with lower levels of isoform 2 and very low levels of isoform 1 detected. In the pharate adult nerve cord isoform 3 is the predominant form, with lower levels of isoform 2 and no isoform 1 detected. In the pharate adult frontal ganglion isoform 3 is expressed, but not isoform 1 and isoform 2.

The protein localises to the secreted. In terms of biological role, neuropeptide stimulator of juvenile hormone synthesis. Cardioregulatory neurohormone that increases heart beat rate in the adult but not in the larva. Inhibits active ion transport in the midgut of feeding fourth instar and day 2 fifth instar larva, but not in the midgut of pharate or wandering fifth instar larva. In Manduca sexta (Tobacco hawkmoth), this protein is Allatotropin.